The sequence spans 34 residues: Photosystem II reaction center protein T (34 aa).

A helical transmembrane segment spans residues 3-23 (ALVYTFLLVSTLGIIFFAIFF).

The protein belongs to the PsbT family. As to quaternary structure, PSII is composed of 1 copy each of membrane proteins PsbA, PsbB, PsbC, PsbD, PsbE, PsbF, PsbH, PsbI, PsbJ, PsbK, PsbL, PsbM, PsbT, PsbY, PsbZ, Psb30/Ycf12, at least 3 peripheral proteins of the oxygen-evolving complex and a large number of cofactors. It forms dimeric complexes.

It localises to the plastid. Its subcellular location is the chloroplast thylakoid membrane. Found at the monomer-monomer interface of the photosystem II (PS II) dimer, plays a role in assembly and dimerization of PSII. PSII is a light-driven water plastoquinone oxidoreductase, using light energy to abstract electrons from H(2)O, generating a proton gradient subsequently used for ATP formation. This Solanum lycopersicum (Tomato) protein is Photosystem II reaction center protein T.